The chain runs to 296 residues: Bifunctional protein FolD (296 aa).

NADP(+) contacts are provided by residues Gly169–Gly171, Thr196, and Val237.

It belongs to the tetrahydrofolate dehydrogenase/cyclohydrolase family. As to quaternary structure, homodimer.

The enzyme catalyses (6R)-5,10-methylene-5,6,7,8-tetrahydrofolate + NADP(+) = (6R)-5,10-methenyltetrahydrofolate + NADPH. It catalyses the reaction (6R)-5,10-methenyltetrahydrofolate + H2O = (6R)-10-formyltetrahydrofolate + H(+). Its pathway is one-carbon metabolism; tetrahydrofolate interconversion. In terms of biological role, catalyzes the oxidation of 5,10-methylenetetrahydrofolate to 5,10-methenyltetrahydrofolate and then the hydrolysis of 5,10-methenyltetrahydrofolate to 10-formyltetrahydrofolate. The chain is Bifunctional protein FolD from Kocuria rhizophila (strain ATCC 9341 / DSM 348 / NBRC 103217 / DC2201).